Here is a 439-residue protein sequence, read N- to C-terminus: Histidine--tRNA ligase (439 aa).

It belongs to the class-II aminoacyl-tRNA synthetase family. Homodimer.

It is found in the cytoplasm. It carries out the reaction tRNA(His) + L-histidine + ATP = L-histidyl-tRNA(His) + AMP + diphosphate + H(+). In Leptospira interrogans serogroup Icterohaemorrhagiae serovar copenhageni (strain Fiocruz L1-130), this protein is Histidine--tRNA ligase.